Consider the following 163-residue polypeptide: ATP synthase subunit delta, mitochondrial (163 aa).

A mitochondrion-targeting transit peptide spans 1 to 18; sequence MLARTIQRFSVVAKRGYA.

The protein belongs to the ATPase epsilon chain family. Subunit of the F-type ATPase which has 2 components, CF(1) - the catalytic core - and CF(0) - the membrane proton channel.

Its subcellular location is the mitochondrion. The protein resides in the mitochondrion inner membrane. Functionally, mitochondrial membrane ATP synthase (F(1)F(0) ATP synthase or Complex V) produces ATP from ADP in the presence of a proton gradient across the membrane which is generated by electron transport complexes of the respiratory chain. F-type ATPases consist of two structural domains, F(1) - containing the extramembraneous catalytic core, and F(0) - containing the membrane proton channel, linked together by a central stalk and a peripheral stalk. During catalysis, ATP turnover in the catalytic domain of F(1) is coupled via a rotary mechanism of the central stalk subunits to proton translocation. Part of the complex F(1) domain and of the central stalk which is part of the complex rotary element. The sequence is that of ATP synthase subunit delta, mitochondrial from Caenorhabditis elegans.